The chain runs to 189 residues: Chitin synthase 3 (189 aa).

The protein belongs to the chitin synthase family. Class II subfamily.

The protein resides in the cell membrane. It catalyses the reaction [(1-&gt;4)-N-acetyl-beta-D-glucosaminyl](n) + UDP-N-acetyl-alpha-D-glucosamine = [(1-&gt;4)-N-acetyl-beta-D-glucosaminyl](n+1) + UDP + H(+). Its function is as follows. Polymerizes chitin, a structural polymer of the cell wall and septum, by transferring the sugar moiety of UDP-GlcNAc to the non-reducing end of the growing chitin polymer. In Ajellomyces capsulatus (Darling's disease fungus), this protein is Chitin synthase 3 (CHS3).